We begin with the raw amino-acid sequence, 809 residues long: G-type lectin S-receptor-like serine/threonine-protein kinase At1g61480 (809 aa).

The first 24 residues, 1–24 (MGKKRIMFFASLLLITIFLSFSYA), serve as a signal peptide directing secretion. In terms of domain architecture, Bulb-type lectin spans 25-144 (GITRESPLSI…NSGRTLWESF (120 aa)). Residues 25–425 (GITRESPLSI…SELGGNKRNK (401 aa)) lie on the Extracellular side of the membrane. N-linked (GlcNAc...) asparagine glycosylation is found at Asn-53, Asn-88, Asn-94, Asn-103, Asn-117, Asn-134, and Asn-236. Residues 278 to 314 (PENSCDIYGFCGPFGICVMSVPPKCKCFKGFVPKSIE) form the EGF-like domain. 2 disulfide bridges follow: Cys-282–Cys-294 and Cys-288–Cys-302. N-linked (GlcNAc...) asparagine glycosylation is found at Asn-320 and Asn-375. In terms of domain architecture, PAN spans 333 to 415 (CQGNTNGKTV…GEILSIRLAS (83 aa)). Disulfide bonds link Cys-368-Cys-389 and Cys-372-Cys-378. Residues 426–446 (IIVASIVSLSLFVILAFAAFC) form a helical membrane-spanning segment. The Cytoplasmic segment spans residues 447–809 (FLRYKVKHTV…EMTQSVILGR (363 aa)). Residues 496 to 781 (FSLSNKLGQG…DLTSPKQPTF (286 aa)) enclose the Protein kinase domain. ATP is bound by residues 502 to 510 (LGQGGFGSV) and Lys-524. Phosphoserine occurs at positions 530 and 545. The segment at 585-602 (RKRLEIDWPKRFNIIEGI) is caM-binding. Residue Asp-621 is the Proton acceptor of the active site. Phosphoserine occurs at positions 625 and 638. At Thr-655 the chain carries Phosphothreonine. 2 positions are modified to phosphoserine: Ser-698 and Ser-792.

It belongs to the protein kinase superfamily. Ser/Thr protein kinase family.

Its subcellular location is the cell membrane. The enzyme catalyses L-seryl-[protein] + ATP = O-phospho-L-seryl-[protein] + ADP + H(+). The catalysed reaction is L-threonyl-[protein] + ATP = O-phospho-L-threonyl-[protein] + ADP + H(+). This Arabidopsis thaliana (Mouse-ear cress) protein is G-type lectin S-receptor-like serine/threonine-protein kinase At1g61480.